The primary structure comprises 182 residues: Early upstream open reading frame (182 aa).

Belongs to the EUO family.

This is Early upstream open reading frame from Chlamydophila psittaci (strain ATCC VR-125 / 6BC) (Chlamydia psittaci).